The chain runs to 93 residues: Integration host factor subunit beta (93 aa).

This sequence belongs to the bacterial histone-like protein family. As to quaternary structure, heterodimer of an alpha and a beta chain.

This protein is one of the two subunits of integration host factor, a specific DNA-binding protein that functions in genetic recombination as well as in transcriptional and translational control. The polypeptide is Integration host factor subunit beta (Vibrio parahaemolyticus serotype O3:K6 (strain RIMD 2210633)).